The chain runs to 511 residues: 2-isopropylmalate synthase (511 aa).

Residues 5-267 (LIIFDTTLRD…DTNIDTMHIL (263 aa)) form the Pyruvate carboxyltransferase domain. Residues Asp14, His202, His204, and Asn238 each contribute to the Mn(2+) site. The segment at 393-511 (KLVSLKVCTE…TVTNKAHPQI (119 aa)) is regulatory domain.

The protein belongs to the alpha-IPM synthase/homocitrate synthase family. LeuA type 1 subfamily. In terms of assembly, homodimer. Requires Mn(2+) as cofactor.

It localises to the cytoplasm. The catalysed reaction is 3-methyl-2-oxobutanoate + acetyl-CoA + H2O = (2S)-2-isopropylmalate + CoA + H(+). The protein operates within amino-acid biosynthesis; L-leucine biosynthesis; L-leucine from 3-methyl-2-oxobutanoate: step 1/4. Catalyzes the condensation of the acetyl group of acetyl-CoA with 3-methyl-2-oxobutanoate (2-ketoisovalerate) to form 3-carboxy-3-hydroxy-4-methylpentanoate (2-isopropylmalate). This is 2-isopropylmalate synthase from Vesicomyosocius okutanii subsp. Calyptogena okutanii (strain HA).